Consider the following 211-residue polypeptide: Uridine kinase (211 aa).

Residue 12-19 (GGSGSGKT) coordinates ATP.

This sequence belongs to the uridine kinase family.

Its subcellular location is the cytoplasm. The catalysed reaction is uridine + ATP = UMP + ADP + H(+). The enzyme catalyses cytidine + ATP = CMP + ADP + H(+). It functions in the pathway pyrimidine metabolism; CTP biosynthesis via salvage pathway; CTP from cytidine: step 1/3. The protein operates within pyrimidine metabolism; UMP biosynthesis via salvage pathway; UMP from uridine: step 1/1. This chain is Uridine kinase, found in Anoxybacillus flavithermus (strain DSM 21510 / WK1).